The chain runs to 284 residues: ATP synthase subunit a (284 aa).

Helical transmembrane passes span 47–67, 108–128, 156–176, 233–253, and 254–274; these read AFHL…LIFF, VAPL…MDLV, VPTA…ILII, MIFI…SLPW, and AIFH…LVIV.

The protein belongs to the ATPase A chain family. As to quaternary structure, F-type ATPases have 2 components, CF(1) - the catalytic core - and CF(0) - the membrane proton channel. CF(1) has five subunits: alpha(3), beta(3), gamma(1), delta(1), epsilon(1). CF(0) has three main subunits: a(1), b(2) and c(9-12). The alpha and beta chains form an alternating ring which encloses part of the gamma chain. CF(1) is attached to CF(0) by a central stalk formed by the gamma and epsilon chains, while a peripheral stalk is formed by the delta and b chains.

It is found in the cell inner membrane. Key component of the proton channel; it plays a direct role in the translocation of protons across the membrane. The sequence is that of ATP synthase subunit a from Ruthia magnifica subsp. Calyptogena magnifica.